The sequence spans 108 residues: Large ribosomal subunit protein bL21 (108 aa).

It belongs to the bacterial ribosomal protein bL21 family. As to quaternary structure, part of the 50S ribosomal subunit. Contacts protein L20.

In terms of biological role, this protein binds to 23S rRNA in the presence of protein L20. The sequence is that of Large ribosomal subunit protein bL21 from Orientia tsutsugamushi (strain Ikeda) (Rickettsia tsutsugamushi).